Reading from the N-terminus, the 197-residue chain is Ribosomal RNA large subunit methyltransferase E (197 aa).

Residues glycine 50, tryptophan 52, aspartate 70, aspartate 88, and aspartate 111 each coordinate S-adenosyl-L-methionine. Lysine 151 acts as the Proton acceptor in catalysis.

This sequence belongs to the class I-like SAM-binding methyltransferase superfamily. RNA methyltransferase RlmE family.

Its subcellular location is the cytoplasm. The catalysed reaction is uridine(2552) in 23S rRNA + S-adenosyl-L-methionine = 2'-O-methyluridine(2552) in 23S rRNA + S-adenosyl-L-homocysteine + H(+). Functionally, specifically methylates the uridine in position 2552 of 23S rRNA at the 2'-O position of the ribose in the fully assembled 50S ribosomal subunit. The protein is Ribosomal RNA large subunit methyltransferase E of Syntrophobacter fumaroxidans (strain DSM 10017 / MPOB).